The following is a 627-amino-acid chain: Glyco-Gag protein (627 aa).

The Cytoplasmic segment spans residues 1 to 63; it reads LGDVPRTSGA…FLLSVWNRSR (63 aa). Residues 64-86 form a helical membrane-spanning segment; that stretch reads AARLVCCSIVLCCLCLTVFLYLS. At 87–627 the chain is on the extracellular side; that stretch reads ENMGQTVTTP…PQASLLTLDD (541 aa). The N-linked (GlcNAc...) asparagine; by host glycan is linked to asparagine 113. Residues 199 to 215 show a composition bias toward pro residues; the sequence is PPSAPSLPPEPPFPTPP. 2 disordered regions span residues 199–310 and 523–627; these read PPSA…RQGG and RETP…TLDD. 2 stretches are compositionally biased toward basic and acidic residues: residues 523–555 and 575–608; these read RETP…EKER and RQDR…DCPK. The CCHC-type zinc-finger motif lies at 593–608; sequence CAYCKEKGHWARDCPK.

In terms of processing, glycosylated by host. Cleaved by host near the middle of the molecule, releasing the c-terminal half containing capsid and nucleoprotein domains op GAG.

The protein resides in the host cell membrane. Functionally, plays a role in viral particle release. Presumably acts by facilitating the fission of the virion bud at the cell surface. May prevent the antiviral activity of murine APOBEC3. The polypeptide is Glyco-Gag protein (Friend murine leukemia virus (isolate 57) (FrMLV)).